We begin with the raw amino-acid sequence, 320 residues long: tRNA N6-adenosine threonylcarbamoyltransferase (320 aa).

Fe cation is bound by residues histidine 114 and histidine 118. Substrate contacts are provided by residues 136 to 140, aspartate 169, glycine 182, aspartate 186, and asparagine 273; that span reads VVSGG. Aspartate 297 is a Fe cation binding site.

Belongs to the KAE1 / TsaD family. It depends on Fe(2+) as a cofactor.

The protein localises to the cytoplasm. The enzyme catalyses L-threonylcarbamoyladenylate + adenosine(37) in tRNA = N(6)-L-threonylcarbamoyladenosine(37) in tRNA + AMP + H(+). Required for the formation of a threonylcarbamoyl group on adenosine at position 37 (t(6)A37) in tRNAs that read codons beginning with adenine. Is involved in the transfer of the threonylcarbamoyl moiety of threonylcarbamoyl-AMP (TC-AMP) to the N6 group of A37, together with TsaE and TsaB. TsaD likely plays a direct catalytic role in this reaction. The protein is tRNA N6-adenosine threonylcarbamoyltransferase of Ureaplasma urealyticum serovar 10 (strain ATCC 33699 / Western).